Here is a 270-residue protein sequence, read N- to C-terminus: Zinc finger protein ZAT2 (270 aa).

2 stretches are compositionally biased toward polar residues: residues 1 to 28 (MSNTSNSDPNSDIPFASSNVTLPSYNQN) and 36 to 48 (LTNNEVGSSSSSP). Residues 1–64 (MSNTSNSDPN…QPDPDASQIA (64 aa)) are disordered. The C2H2-type 1 zinc finger occupies 65-87 (RPCTECGKQFGSLKALFGHMRCH). Residues 95–119 (INPPSNFKRRINSNAASSSSSWDPS) are disordered. Residues 106 to 115 (NSNAASSSSS) show a composition bias toward low complexity. 2 C2H2-type zinc fingers span residues 148 to 170 (FECDGCKKVFGSHQALGGHRATH) and 211 to 233 (HRCNICSRVFSSGQALGGHMRCH).

In terms of assembly, interacts (via the EAR motif) with TPL. As to expression, expressed exclusively in pollen.

The protein localises to the nucleus. In terms of biological role, mediates the regulation of male germ cell division by DUO1. The polypeptide is Zinc finger protein ZAT2 (Arabidopsis thaliana (Mouse-ear cress)).